The following is a 668-amino-acid chain: DNA ligase (668 aa).

NAD(+) contacts are provided by residues Asp34–Asp38, Ser83–Leu84, and Glu114. The active-site N6-AMP-lysine intermediate is Lys116. Arg137, Glu171, Lys286, and Lys310 together coordinate NAD(+). Zn(2+) contacts are provided by Cys404, Cys407, Cys422, and Cys427. One can recognise a BRCT domain in the interval Asn588 to Gly668.

It belongs to the NAD-dependent DNA ligase family. LigA subfamily. It depends on Mg(2+) as a cofactor. Mn(2+) serves as cofactor.

The enzyme catalyses NAD(+) + (deoxyribonucleotide)n-3'-hydroxyl + 5'-phospho-(deoxyribonucleotide)m = (deoxyribonucleotide)n+m + AMP + beta-nicotinamide D-nucleotide.. Its function is as follows. DNA ligase that catalyzes the formation of phosphodiester linkages between 5'-phosphoryl and 3'-hydroxyl groups in double-stranded DNA using NAD as a coenzyme and as the energy source for the reaction. It is essential for DNA replication and repair of damaged DNA. This Mycoplasma capricolum subsp. capricolum (strain California kid / ATCC 27343 / NCTC 10154) protein is DNA ligase.